The following is a 502-amino-acid chain: 4,4'-diapophytoene desaturase (4,4'-diaponeurosporene-forming) (502 aa).

5–17 contributes to the FAD binding site; it reads VIGAGVTGLAAAA.

This sequence belongs to the carotenoid/retinoid oxidoreductase family. CrtN subfamily.

It catalyses the reaction 15-cis-4,4'-diapophytoene + 3 FAD + 3 H(+) = all-trans-4,4'-diaponeurosporene + 3 FADH2. Its pathway is carotenoid biosynthesis; staphyloxanthin biosynthesis; staphyloxanthin from farnesyl diphosphate: step 2/5. Its function is as follows. Involved in the biosynthesis of the yellow-orange carotenoid staphyloxanthin, which plays a role in the virulence via its protective function against oxidative stress. Catalyzes three successive dehydrogenation reactions that lead to the introduction of three double bonds into 4,4'-diapophytoene (dehydrosqualene), with 4,4'-diapophytofluene and 4,4'-diapo-zeta-carotene as intermediates, and 4,4'-diaponeurosporene (the major deep-yellow pigment in staphylococci strains) as the end product. The polypeptide is 4,4'-diapophytoene desaturase (4,4'-diaponeurosporene-forming) (Staphylococcus aureus (strain MW2)).